The following is a 454-amino-acid chain: Chromosomal replication initiator protein DnaA (454 aa).

The tract at residues 1 to 81 is domain I, interacts with DnaA modulators; it reads MNNSLWQQCA…PNVVLKVGEA (81 aa). Positions 79-110 are disordered; the sequence is GEASPTQRDSGSPQRAAATRRKTPNFSSGNTD. Residues 81 to 117 are domain II; the sequence is ASPTQRDSGSPQRAAATRRKTPNFSSGNTDVEVPFES. A compositionally biased stretch (polar residues) spans 82-91; sequence SPTQRDSGSP. Residues 118 to 334 are domain III, AAA+ region; it reads NIHPEYTFDN…GALNRVVANV (217 aa). ATP-binding residues include Gly-162, Gly-164, Lys-165, and Thr-166. The interval 335 to 454 is domain IV, binds dsDNA; sequence QLTGRPITID…YRNLIRTLSS (120 aa).

Belongs to the DnaA family. As to quaternary structure, oligomerizes as a right-handed, spiral filament on DNA at oriC.

It is found in the cytoplasm. Functionally, plays an essential role in the initiation and regulation of chromosomal replication. ATP-DnaA binds to the origin of replication (oriC) to initiate formation of the DNA replication initiation complex once per cell cycle. Binds the DnaA box (a 9 base pair repeat at the origin) and separates the double-stranded (ds)DNA. Forms a right-handed helical filament on oriC DNA; dsDNA binds to the exterior of the filament while single-stranded (ss)DNA is stabiized in the filament's interior. The ATP-DnaA-oriC complex binds and stabilizes one strand of the AT-rich DNA unwinding element (DUE), permitting loading of DNA polymerase. After initiation quickly degrades to an ADP-DnaA complex that is not apt for DNA replication. Binds acidic phospholipids. This chain is Chromosomal replication initiator protein DnaA, found in Idiomarina loihiensis (strain ATCC BAA-735 / DSM 15497 / L2-TR).